The chain runs to 484 residues: ATP synthase subunit beta, chloroplastic (484 aa).

163–170 (GGAGVGKT) contacts ATP.

Belongs to the ATPase alpha/beta chains family. In terms of assembly, F-type ATPases have 2 components, CF(1) - the catalytic core - and CF(0) - the membrane proton channel. CF(1) has five subunits: alpha(3), beta(3), gamma(1), delta(1), epsilon(1). CF(0) has four main subunits: a(1), b(1), b'(1) and c(9-12).

Its subcellular location is the plastid. The protein resides in the chloroplast thylakoid membrane. It catalyses the reaction ATP + H2O + 4 H(+)(in) = ADP + phosphate + 5 H(+)(out). Functionally, produces ATP from ADP in the presence of a proton gradient across the membrane. The catalytic sites are hosted primarily by the beta subunits. This chain is ATP synthase subunit beta, chloroplastic, found in Stigeoclonium helveticum (Green alga).